Consider the following 220-residue polypeptide: Inner membrane-spanning protein YciB (220 aa).

The next 6 membrane-spanning stretches (helical) occupy residues 20-40 (EVPP…FFFA), 57-77 (IGAP…IALA), 86-106 (LPIM…LTLW), 123-143 (LFGG…GYVF), 156-176 (KLTL…EIVW), and 187-207 (FKVW…MPLI).

It belongs to the YciB family.

It localises to the cell inner membrane. Its function is as follows. Plays a role in cell envelope biogenesis, maintenance of cell envelope integrity and membrane homeostasis. The sequence is that of Inner membrane-spanning protein YciB from Brucella abortus (strain S19).